The chain runs to 935 residues: Kinesin heavy chain (935 aa).

Residues 5–329 (NIKVVCRFRP…LRFGARAKSI (325 aa)) form the Kinesin motor domain. Residues 87–94 (GQTGSGKT) and 237–244 (GSEKVGKT) each bind ATP. A coiled-coil region spans residues 342–887 (AELKALLKKV…SQKSQNSLAA (546 aa)). 2 disordered regions span residues 400–419 (APGF…TPVP) and 898–935 (RGNG…MNSR).

This sequence belongs to the TRAFAC class myosin-kinesin ATPase superfamily. Kinesin family. Kinesin subfamily.

The protein localises to the cytoplasm. It is found in the cytoskeleton. In terms of biological role, kinesin is a microtubule-associated force-producing protein that may play a role in organelle transport. Its motor activity is directed toward the microtubule's plus end. The speed of this motor is 4-5 times faster than its animal counterparts. The chain is Kinesin heavy chain from Syncephalastrum racemosum (Filamentous fungus).